Here is a 275-residue protein sequence, read N- to C-terminus: Diaminopimelate epimerase (275 aa).

Substrate contacts are provided by Asn-12, Gln-45, and Asn-65. Cys-74 acts as the Proton donor in catalysis. Substrate contacts are provided by residues 75–76 (GN), Asn-158, Asn-191, and 209–210 (ER). Cys-218 functions as the Proton acceptor in the catalytic mechanism. 219–220 (GT) contacts substrate.

Belongs to the diaminopimelate epimerase family. As to quaternary structure, homodimer.

Its subcellular location is the cytoplasm. It catalyses the reaction (2S,6S)-2,6-diaminopimelate = meso-2,6-diaminopimelate. Its pathway is amino-acid biosynthesis; L-lysine biosynthesis via DAP pathway; DL-2,6-diaminopimelate from LL-2,6-diaminopimelate: step 1/1. In terms of biological role, catalyzes the stereoinversion of LL-2,6-diaminopimelate (L,L-DAP) to meso-diaminopimelate (meso-DAP), a precursor of L-lysine and an essential component of the bacterial peptidoglycan. The polypeptide is Diaminopimelate epimerase (Shewanella sp. (strain MR-4)).